Consider the following 322-residue polypeptide: Sideroflexin-1 (322 aa).

An N-acetylserine modification is found at Ser2. Over 2–102 (SGELPPNINI…MSAQVPMNMT (101 aa)) the chain is Mitochondrial matrix. Residues 103–120 (ITGCMMTFYRTTPAVLFW) traverse the membrane as a helical segment. The Mitochondrial intermembrane segment spans residues 121 to 146 (QWINQSFNAVVNYTNRSGDAPLTVNE). Residues 147–167 (LGTAYVSATTGAVATALGLNA) traverse the membrane as a helical segment. Over 168–174 (LTKHVSP) the chain is Mitochondrial matrix. A helical transmembrane segment spans residues 175-195 (LIGRFVPFAAVAAANCINIPL). At 196–228 (MRQRELKVGIPVTDENGNRLGESANAAKQAITQ) the chain is on the mitochondrial intermembrane side. Residues 229–249 (VVVSRILMAAPGMAIPPFIMN) form a helical membrane-spanning segment. Topologically, residues 250–266 (TLEKKAFLKRFPWMSAP) are mitochondrial matrix. The chain crosses the membrane as a helical span at residues 267-287 (IQVGLVGFCLVFATPLCCALF). Topologically, residues 288–322 (PQKSSMSVTSLEAELQAKIQESHPELRRVYFNKGL) are mitochondrial intermembrane.

This sequence belongs to the sideroflexin family. As to expression, highly expressed in tissues with high one-carbon metabolism activity, such as blood, liver and kidney.

It localises to the mitochondrion inner membrane. It catalyses the reaction L-serine(in) = L-serine(out). The catalysed reaction is L-alanine(in) = L-alanine(out). It carries out the reaction L-cysteine(in) = L-cysteine(out). In terms of biological role, amino acid transporter importing serine, an essential substrate of the mitochondrial branch of the one-carbon pathway, into mitochondria. Mitochondrial serine is then converted to glycine and formate, which exits to the cytosol where it is used to generate the charged folates that serve as one-carbon donors. May also transport other amino acids including alanine and cysteine. The chain is Sideroflexin-1 from Homo sapiens (Human).